Reading from the N-terminus, the 281-residue chain is Pantothenate synthetase (281 aa).

Residue 30 to 37 participates in ATP binding; it reads MGNLHQGH. The active-site Proton donor is His-37. Residue Gln-61 participates in (R)-pantoate binding. Gln-61 provides a ligand contact to beta-alanine. 149-152 serves as a coordination point for ATP; sequence GNKD. A (R)-pantoate-binding site is contributed by Gln-155. ATP-binding positions include Ile-178 and 186–189; that span reads MSSR.

It belongs to the pantothenate synthetase family. As to quaternary structure, homodimer.

The protein localises to the cytoplasm. It carries out the reaction (R)-pantoate + beta-alanine + ATP = (R)-pantothenate + AMP + diphosphate + H(+). The protein operates within cofactor biosynthesis; (R)-pantothenate biosynthesis; (R)-pantothenate from (R)-pantoate and beta-alanine: step 1/1. Functionally, catalyzes the condensation of pantoate with beta-alanine in an ATP-dependent reaction via a pantoyl-adenylate intermediate. This is Pantothenate synthetase from Shewanella oneidensis (strain ATCC 700550 / JCM 31522 / CIP 106686 / LMG 19005 / NCIMB 14063 / MR-1).